Here is a 155-residue protein sequence, read N- to C-terminus: MSRRGPAEKKTVKRDPFYRNRVVNMLINRILKHGKKSLAYKILYRAMKKIQQKKKRNPLSILRQAIRRVTPKIAVKRRRVSGSAYQVPIEIKAPQGKVLAIRWLLEAARKRPGRNMAFKLSSELMDATKGKGNAIRKKEETYRMAEANRTFANFR.

Belongs to the universal ribosomal protein uS7 family. In terms of assembly, part of the 30S ribosomal subunit.

The protein resides in the plastid. It is found in the chloroplast. In terms of biological role, one of the primary rRNA binding proteins, it binds directly to 16S rRNA where it nucleates assembly of the head domain of the 30S subunit. The sequence is that of Small ribosomal subunit protein uS7cz/uS7cy (rps7-A) from Pelargonium hortorum (Common geranium).